Here is an 876-residue protein sequence, read N- to C-terminus: Alanine--tRNA ligase (876 aa).

Residues histidine 565, histidine 569, cysteine 667, and histidine 671 each contribute to the Zn(2+) site.

The protein belongs to the class-II aminoacyl-tRNA synthetase family. It depends on Zn(2+) as a cofactor.

The protein resides in the cytoplasm. The catalysed reaction is tRNA(Ala) + L-alanine + ATP = L-alanyl-tRNA(Ala) + AMP + diphosphate. In terms of biological role, catalyzes the attachment of alanine to tRNA(Ala) in a two-step reaction: alanine is first activated by ATP to form Ala-AMP and then transferred to the acceptor end of tRNA(Ala). Also edits incorrectly charged Ser-tRNA(Ala) and Gly-tRNA(Ala) via its editing domain. This chain is Alanine--tRNA ligase, found in Staphylococcus aureus (strain MRSA252).